The chain runs to 577 residues: Proline--tRNA ligase (577 aa).

It belongs to the class-II aminoacyl-tRNA synthetase family. ProS type 1 subfamily. In terms of assembly, homodimer.

The protein resides in the cytoplasm. It catalyses the reaction tRNA(Pro) + L-proline + ATP = L-prolyl-tRNA(Pro) + AMP + diphosphate. Functionally, catalyzes the attachment of proline to tRNA(Pro) in a two-step reaction: proline is first activated by ATP to form Pro-AMP and then transferred to the acceptor end of tRNA(Pro). As ProRS can inadvertently accommodate and process non-cognate amino acids such as alanine and cysteine, to avoid such errors it has two additional distinct editing activities against alanine. One activity is designated as 'pretransfer' editing and involves the tRNA(Pro)-independent hydrolysis of activated Ala-AMP. The other activity is designated 'posttransfer' editing and involves deacylation of mischarged Ala-tRNA(Pro). The misacylated Cys-tRNA(Pro) is not edited by ProRS. The protein is Proline--tRNA ligase of Thermotoga neapolitana (strain ATCC 49049 / DSM 4359 / NBRC 107923 / NS-E).